The primary structure comprises 1203 residues: DNA-directed RNA polymerase subunit beta' (1203 aa).

Residues Cys-60, Cys-62, Cys-75, and Cys-78 each contribute to the Zn(2+) site. Positions 449, 451, and 453 each coordinate Mg(2+). Residues Cys-818, Cys-892, Cys-899, and Cys-902 each contribute to the Zn(2+) site.

It belongs to the RNA polymerase beta' chain family. As to quaternary structure, the RNAP catalytic core consists of 2 alpha, 1 beta, 1 beta' and 1 omega subunit. When a sigma factor is associated with the core the holoenzyme is formed, which can initiate transcription. Requires Mg(2+) as cofactor. Zn(2+) serves as cofactor.

It carries out the reaction RNA(n) + a ribonucleoside 5'-triphosphate = RNA(n+1) + diphosphate. In terms of biological role, DNA-dependent RNA polymerase catalyzes the transcription of DNA into RNA using the four ribonucleoside triphosphates as substrates. The polypeptide is DNA-directed RNA polymerase subunit beta' (Bacillus cereus (strain ZK / E33L)).